Here is a 127-residue protein sequence, read N- to C-terminus: Large ribosomal subunit protein bL17 (127 aa).

Belongs to the bacterial ribosomal protein bL17 family. In terms of assembly, part of the 50S ribosomal subunit. Contacts protein L32.

The chain is Large ribosomal subunit protein bL17 from Lactobacillus gasseri (strain ATCC 33323 / DSM 20243 / BCRC 14619 / CIP 102991 / JCM 1131 / KCTC 3163 / NCIMB 11718 / NCTC 13722 / AM63).